The primary structure comprises 143 residues: 1,4-dihydroxy-2-naphthoyl-CoA hydrolase (143 aa).

D14 is a catalytic residue.

The protein belongs to the 4-hydroxybenzoyl-CoA thioesterase family. DHNA-CoA hydrolase subfamily.

The catalysed reaction is 1,4-dihydroxy-2-naphthoyl-CoA + H2O = 1,4-dihydroxy-2-naphthoate + CoA + H(+). Its pathway is cofactor biosynthesis; phylloquinone biosynthesis. The protein operates within quinol/quinone metabolism; 1,4-dihydroxy-2-naphthoate biosynthesis; 1,4-dihydroxy-2-naphthoate from chorismate: step 7/7. In terms of biological role, catalyzes the hydrolysis of 1,4-dihydroxy-2-naphthoyl-CoA (DHNA-CoA) to 1,4-dihydroxy-2-naphthoate (DHNA), a reaction involved in phylloquinone (vitamin K1) biosynthesis. The protein is 1,4-dihydroxy-2-naphthoyl-CoA hydrolase of Gloeothece citriformis (strain PCC 7424) (Cyanothece sp. (strain PCC 7424)).